Consider the following 269-residue polypeptide: Tryptophan synthase alpha chain (269 aa).

Active-site proton acceptor residues include E49 and D60.

Belongs to the TrpA family. As to quaternary structure, tetramer of two alpha and two beta chains.

It carries out the reaction (1S,2R)-1-C-(indol-3-yl)glycerol 3-phosphate + L-serine = D-glyceraldehyde 3-phosphate + L-tryptophan + H2O. It participates in amino-acid biosynthesis; L-tryptophan biosynthesis; L-tryptophan from chorismate: step 5/5. In terms of biological role, the alpha subunit is responsible for the aldol cleavage of indoleglycerol phosphate to indole and glyceraldehyde 3-phosphate. The chain is Tryptophan synthase alpha chain from Pseudomonas putida (strain W619).